A 1740-amino-acid chain; its full sequence is Vitamin B12-dependent ribonucleoside-diphosphate reductase (1740 aa).

The ATP-cone domain occupies 4-96; sequence EKVMKRDGRI…LYRKKKAEIR (93 aa). Residues T257, 272-273, and G301 contribute to the substrate site; that span reads AC. C273 and C1308 are joined by a disulfide. The region spanning 443-582 is the DOD-type homing endonuclease 1 domain; sequence LAGFIAGDGC…VTHYLNALGI (140 aa). N913 functions as the Proton acceptor in the catalytic mechanism. 913-914 serves as a coordination point for substrate; sequence NP. One can recognise a DOD-type homing endonuclease 2 domain in the interval 1063-1194; it reads VLGWFIGDGY…VQDLLLLFGI (132 aa). The active-site Cysteine radical intermediate is the C1297. Residues 1297–1299 and 1471–1475 each bind substrate; these read CGE and PTGSV. E1299 (proton acceptor) is an active-site residue.

This sequence belongs to the ribonucleoside diphosphate reductase class-2 family. Adenosylcob(III)alamin serves as cofactor. This protein undergoes a protein self splicing that involves a post-translational excision of the intervening region (intein) followed by peptide ligation.

It carries out the reaction a 2'-deoxyribonucleoside 5'-diphosphate + [thioredoxin]-disulfide + H2O = a ribonucleoside 5'-diphosphate + [thioredoxin]-dithiol. In terms of biological role, provides the precursors necessary for DNA synthesis. Catalyzes the biosynthesis of deoxyribonucleotides from the corresponding ribonucleotides. The protein is Vitamin B12-dependent ribonucleoside-diphosphate reductase (rnr) of Pyrococcus furiosus (strain ATCC 43587 / DSM 3638 / JCM 8422 / Vc1).